The sequence spans 219 residues: Protein DCL homolog, chloroplastic (219 aa).

The transit peptide at 1 to 48 directs the protein to the chloroplast; the sequence is MSLASIPSSSPVASPYFRCRTYIFSFSSSPLCLYFPRGDSTSLRPRVR. The disordered stretch occupies residues 70–96; the sequence is LRRPRIASEESSEEEEEEEEENSEGDE. Acidic residues predominate over residues 79 to 96; that stretch reads ESSEEEEEEEEENSEGDE.

In terms of tissue distribution, expressed in leaves, stems, flowers and siliques.

It localises to the plastid. The protein resides in the chloroplast. Its function is as follows. Required for normal plastid function and plant development. Required for correct plastid ribosome assembly. Required for processing and maturation of 4.5S rRNA. This is Protein DCL homolog, chloroplastic from Arabidopsis thaliana (Mouse-ear cress).